We begin with the raw amino-acid sequence, 146 residues long: 3-dehydroquinate dehydratase (146 aa).

The active-site Proton acceptor is the Tyr-22. The substrate site is built by Asn-73, His-79, and Asp-86. His-99 acts as the Proton donor in catalysis. Residues 100–101 (LS) and Arg-110 each bind substrate.

It belongs to the type-II 3-dehydroquinase family. In terms of assembly, homododecamer.

The catalysed reaction is 3-dehydroquinate = 3-dehydroshikimate + H2O. Its pathway is metabolic intermediate biosynthesis; chorismate biosynthesis; chorismate from D-erythrose 4-phosphate and phosphoenolpyruvate: step 3/7. Its function is as follows. Catalyzes a trans-dehydration via an enolate intermediate. This Synechococcus sp. (strain CC9605) protein is 3-dehydroquinate dehydratase.